We begin with the raw amino-acid sequence, 501 residues long: ATP synthase subunit alpha (501 aa).

Residue 169 to 176 (GDRQTGKT) participates in ATP binding.

This sequence belongs to the ATPase alpha/beta chains family. As to quaternary structure, F-type ATPases have 2 components, CF(1) - the catalytic core - and CF(0) - the membrane proton channel. CF(1) has five subunits: alpha(3), beta(3), gamma(1), delta(1), epsilon(1). CF(0) has three main subunits: a(1), b(2) and c(9-12). The alpha and beta chains form an alternating ring which encloses part of the gamma chain. CF(1) is attached to CF(0) by a central stalk formed by the gamma and epsilon chains, while a peripheral stalk is formed by the delta and b chains.

The protein resides in the cell membrane. The catalysed reaction is ATP + H2O + 4 H(+)(in) = ADP + phosphate + 5 H(+)(out). Functionally, produces ATP from ADP in the presence of a proton gradient across the membrane. The alpha chain is a regulatory subunit. The chain is ATP synthase subunit alpha from Streptococcus agalactiae serotype III (strain NEM316).